The following is a 499-amino-acid chain: MSKQFILAIDQGTTSSRAIIFDKKGNIKKIAQKEFTQIYPKSGWVEHDPMEIWASQSSIVREALEYARVSPRDIAAIGITNQRETTVVWDKNTGQPVYNAIVWQCRRTSHICDEINKNEDLKKYIRKNTGLIVDAYFSATKIKWILDNVDGAREKAEKGDLLFGTIDTWLIWNLTKGEVHATDFSNASRTMLFNINTLEWDKKILEYLDIPVSMLPEVRSSSGDFGHTHPSTLGGARIPIAGVAGDQQSALFGHCCFEEGMAKNTYGTGCFALMNVGDKPVFSDAGLLTTIAWAEDGKPTYALEGSVFIAGAVIQWIRDGLGLVRSAEDSEYYATKIDSTDGVYLVPAFVGLGTPYWDMYARGTIVGITRDTRREHIIRAALEAIAYQAKDVLDCMKEDTGLDWAGLRVDGGAVQNNFLMQFQSDILQSEISKPKINEITGLGAVFLAGLAVGFWKDKEELKTILTTEKTFEPKKDPETVAHDYKGWKKAVQRSMAWAE.

ADP is bound at residue threonine 13. Residues threonine 13, threonine 14, and serine 15 each contribute to the ATP site. Threonine 13 serves as a coordination point for sn-glycerol 3-phosphate. An ADP-binding site is contributed by arginine 17. Sn-glycerol 3-phosphate-binding residues include arginine 83, glutamate 84, tyrosine 136, and aspartate 246. The glycerol site is built by arginine 83, glutamate 84, tyrosine 136, aspartate 246, and glutamine 247. The ADP site is built by threonine 268 and glycine 311. Residues threonine 268, glycine 311, glutamine 315, and glycine 412 each contribute to the ATP site. ADP-binding residues include glycine 412 and asparagine 416.

This sequence belongs to the FGGY kinase family.

It carries out the reaction glycerol + ATP = sn-glycerol 3-phosphate + ADP + H(+). The protein operates within polyol metabolism; glycerol degradation via glycerol kinase pathway; sn-glycerol 3-phosphate from glycerol: step 1/1. With respect to regulation, inhibited by fructose 1,6-bisphosphate (FBP). In terms of biological role, key enzyme in the regulation of glycerol uptake and metabolism. Catalyzes the phosphorylation of glycerol to yield sn-glycerol 3-phosphate. In Francisella philomiragia subsp. philomiragia (strain ATCC 25017 / CCUG 19701 / FSC 153 / O#319-036), this protein is Glycerol kinase.